A 99-amino-acid polypeptide reads, in one-letter code: Aspartyl/glutamyl-tRNA(Asn/Gln) amidotransferase subunit C (99 aa).

It belongs to the GatC family. As to quaternary structure, heterotrimer of A, B and C subunits.

The catalysed reaction is L-glutamyl-tRNA(Gln) + L-glutamine + ATP + H2O = L-glutaminyl-tRNA(Gln) + L-glutamate + ADP + phosphate + H(+). It catalyses the reaction L-aspartyl-tRNA(Asn) + L-glutamine + ATP + H2O = L-asparaginyl-tRNA(Asn) + L-glutamate + ADP + phosphate + 2 H(+). Its function is as follows. Allows the formation of correctly charged Asn-tRNA(Asn) or Gln-tRNA(Gln) through the transamidation of misacylated Asp-tRNA(Asn) or Glu-tRNA(Gln) in organisms which lack either or both of asparaginyl-tRNA or glutaminyl-tRNA synthetases. The reaction takes place in the presence of glutamine and ATP through an activated phospho-Asp-tRNA(Asn) or phospho-Glu-tRNA(Gln). The sequence is that of Aspartyl/glutamyl-tRNA(Asn/Gln) amidotransferase subunit C from Burkholderia thailandensis (strain ATCC 700388 / DSM 13276 / CCUG 48851 / CIP 106301 / E264).